The primary structure comprises 687 residues: Polyphosphate kinase (687 aa).

An ATP-binding site is contributed by Asn45. 2 residues coordinate Mg(2+): Arg375 and Arg405. The active-site Phosphohistidine intermediate is His435. 3 residues coordinate ATP: Tyr472, Arg568, and His596.

This sequence belongs to the polyphosphate kinase 1 (PPK1) family. Mg(2+) is required as a cofactor. In terms of processing, an intermediate of this reaction is the autophosphorylated ppk in which a phosphate is covalently linked to a histidine residue through a N-P bond.

It catalyses the reaction [phosphate](n) + ATP = [phosphate](n+1) + ADP. Its function is as follows. Catalyzes the reversible transfer of the terminal phosphate of ATP to form a long-chain polyphosphate (polyP). The sequence is that of Polyphosphate kinase from Burkholderia cenocepacia (strain HI2424).